We begin with the raw amino-acid sequence, 887 residues long: DNA mismatch repair protein MutS (887 aa).

626 to 633 lines the ATP pocket; sequence GPNMAGKS.

This sequence belongs to the DNA mismatch repair MutS family.

Functionally, this protein is involved in the repair of mismatches in DNA. It is possible that it carries out the mismatch recognition step. This protein has a weak ATPase activity. In Methanococcoides burtonii (strain DSM 6242 / NBRC 107633 / OCM 468 / ACE-M), this protein is DNA mismatch repair protein MutS.